The sequence spans 496 residues: Omega-crystallin (496 aa).

It belongs to the aldehyde dehydrogenase family. Lens.

Functionally, omega-crystallins are structural components of squids and octopi eye lens. Contains relatively little if any DHAL activity. The protein is Omega-crystallin of Enteroctopus dofleini (North Pacific giant octopus).